Here is a 326-residue protein sequence, read N- to C-terminus: Glycerol-3-phosphate dehydrogenase [NAD(P)+] (326 aa).

NADPH-binding residues include W13, R33, and K107. Residues K107, G135, and S137 each coordinate sn-glycerol 3-phosphate. Position 139 (A139) interacts with NADPH. 5 residues coordinate sn-glycerol 3-phosphate: K190, D243, S253, R254, and N255. Catalysis depends on K190, which acts as the Proton acceptor. R254 provides a ligand contact to NADPH. Residues L273 and E275 each coordinate NADPH.

It belongs to the NAD-dependent glycerol-3-phosphate dehydrogenase family.

The protein resides in the cytoplasm. It catalyses the reaction sn-glycerol 3-phosphate + NAD(+) = dihydroxyacetone phosphate + NADH + H(+). The enzyme catalyses sn-glycerol 3-phosphate + NADP(+) = dihydroxyacetone phosphate + NADPH + H(+). Its pathway is membrane lipid metabolism; glycerophospholipid metabolism. Catalyzes the reduction of the glycolytic intermediate dihydroxyacetone phosphate (DHAP) to sn-glycerol 3-phosphate (G3P), the key precursor for phospholipid synthesis. This Brucella abortus (strain 2308) protein is Glycerol-3-phosphate dehydrogenase [NAD(P)+].